Here is a 325-residue protein sequence, read N- to C-terminus: Hydroxymethylglutaryl-CoA lyase, mitochondrial (325 aa).

A mitochondrion-targeting transit peptide spans 1–27 (MATVRKAFPQRLVGLASLRAASTSSMG). One can recognise a Pyruvate carboxyltransferase domain in the interval 33–300 (VKIVEVGPRD…HTGVNLQKLL (268 aa)). Arg41 contributes to the substrate binding site. An a divalent metal cation-binding site is contributed by Asp42. Lys48 carries the post-translational modification N6-acetyllysine; alternate. Position 48 is an N6-succinyllysine; alternate (Lys48). The residue at position 111 (Lys111) is an N6-acetyllysine. N6-acetyllysine; alternate occurs at positions 137 and 179. Residues Lys137 and Lys179 each carry the N6-succinyllysine; alternate modification. A divalent metal cation contacts are provided by His233 and His235. Cys266 is a catalytic residue. Position 275 (Asn275) interacts with a divalent metal cation. Positions 323–325 (CKL) match the Microbody targeting signal motif. Residue Lys324 is modified to N6-acetyllysine.

The protein belongs to the HMG-CoA lyase family. As to quaternary structure, homodimer; disulfide-linked. Can also form homotetramers. As to expression, in suckling rat, highest levels in liver and in intestine. Lower levels in heart, kidney and cerebellum. Weak expression in brain cortex, medulla and midbrain. Levels decrease slightly during weaning.

It localises to the mitochondrion matrix. The protein localises to the peroxisome. It catalyses the reaction (3S)-3-hydroxy-3-methylglutaryl-CoA = acetoacetate + acetyl-CoA. It participates in metabolic intermediate metabolism; (S)-3-hydroxy-3-methylglutaryl-CoA degradation; acetoacetate from (S)-3-hydroxy-3-methylglutaryl-CoA: step 1/1. Mitochondrial 3-hydroxy-3-methylglutaryl-CoA lyase that catalyzes a cation-dependent cleavage of (S)-3-hydroxy-3-methylglutaryl-CoA into acetyl-CoA and acetoacetate, a key step in ketogenesis. Terminal step in leucine catabolism. Ketone bodies (beta-hydroxybutyrate, acetoacetate and acetone) are essential as an alternative source of energy to glucose, as lipid precursors and as regulators of metabolism. In Rattus norvegicus (Rat), this protein is Hydroxymethylglutaryl-CoA lyase, mitochondrial (Hmgcl).